The sequence spans 432 residues: D-amino acid dehydrogenase (432 aa).

3–17 is a binding site for FAD; it reads VVILGSGVVGVTSAW.

This sequence belongs to the DadA oxidoreductase family. FAD is required as a cofactor.

It catalyses the reaction a D-alpha-amino acid + A + H2O = a 2-oxocarboxylate + AH2 + NH4(+). It functions in the pathway amino-acid degradation; D-alanine degradation; NH(3) and pyruvate from D-alanine: step 1/1. Oxidative deamination of D-amino acids. This chain is D-amino acid dehydrogenase, found in Salmonella paratyphi C (strain RKS4594).